A 362-amino-acid polypeptide reads, in one-letter code: Large ribosomal subunit protein uL2m (362 aa).

Residues 1-23 constitute a mitochondrion transit peptide; sequence MLSYNRFRGYLIPQIHALKLFRY. Positions 306–362 are disordered; that stretch reads AMNPCDHPHGGGGGKSIGNKPSQSPWGVLAKGGYKTRRGKNVNKLLVRDRPRGKEKR. Basic and acidic residues predominate over residues 351–362; that stretch reads LVRDRPRGKEKR.

Belongs to the universal ribosomal protein uL2 family. As to quaternary structure, component of the mitochondrial large ribosomal subunit (mt-LSU). Mature yeast 74S mitochondrial ribosomes consist of a small (37S) and a large (54S) subunit. The 37S small subunit contains a 15S ribosomal RNA (15S mt-rRNA) and at least 32 different proteins. The 54S large subunit contains a 21S rRNA (21S mt-rRNA) and at least 45 different proteins. uL2m has a Na/K ligand binding site.

It localises to the mitochondrion. Its function is as follows. Component of the mitochondrial ribosome (mitoribosome), a dedicated translation machinery responsible for the synthesis of mitochondrial genome-encoded proteins, including at least some of the essential transmembrane subunits of the mitochondrial respiratory chain. The mitoribosomes are attached to the mitochondrial inner membrane and translation products are cotranslationally integrated into the membrane. The chain is Large ribosomal subunit protein uL2m (rml2) from Schizosaccharomyces pombe (strain 972 / ATCC 24843) (Fission yeast).